Here is a 209-residue protein sequence, read N- to C-terminus: Urease accessory protein UreG (209 aa).

Gly-18–Thr-25 is a GTP binding site.

It belongs to the SIMIBI class G3E GTPase family. UreG subfamily. In terms of assembly, homodimer. UreD, UreF and UreG form a complex that acts as a GTP-hydrolysis-dependent molecular chaperone, activating the urease apoprotein by helping to assemble the nickel containing metallocenter of UreC. The UreE protein probably delivers the nickel.

It is found in the cytoplasm. Facilitates the functional incorporation of the urease nickel metallocenter. This process requires GTP hydrolysis, probably effectuated by UreG. The polypeptide is Urease accessory protein UreG (Cupriavidus pinatubonensis (strain JMP 134 / LMG 1197) (Cupriavidus necator (strain JMP 134))).